Reading from the N-terminus, the 898-residue chain is Transportin-1 (898 aa).

20 HEAT repeats span residues 19-46, 51-89, 98-131, 137-174, 181-211, 224-251, 263-290, 306-397, 405-433, 445-472, 486-519, 527-560, 568-606, 614-665, 676-707, 715-748, 756-791, 799-832, 841-872, and 875-895; these read GLQQ…QKLE, YPDF…AHFQ, FIKS…KGEL, LLPK…LDSD, NIMI…QFII, FIEN…VMLL, HNIV…FWLT, PKLI…LANV, HILP…GAIA, PELI…TLSR, LKPL…EEEA, LAYI…ADSV, EYIQ…TALQ, EPVY…GLGG, ILTL…KACF, ADFM…IQMG, PMVL…YVCP, QQFI…ISVN, IFFC…KNQV, and ENWR…LAAF. The Importin N-terminal domain occupies 41-109; sequence VQQKLEQLNQ…KSECLNNIGD (69 aa). The disordered stretch occupies residues 347–374; sequence FHRSRTVAQQHEEDGIEEEDDDDDEIDD. Acidic residues predominate over residues 360–374; the sequence is DGIEEEDDDDDEIDD.

The protein belongs to the importin beta family. Importin beta-2 subfamily. Identified in a complex that contains TNPO1, RAN and RANBP1. Binds HNRPA1, HNRPA2, HNRNPDL, RPS7, RPL5 and RAN. Interacts with H2A, H2B, H3 and H4 histones. Interacts with isoform 1 and isoform 5 of ADAR/ADAR1 (via DRBM 3 domain). Interacts with SNAI1 (via zinc fingers); the interaction mediates SNAI1 nuclear import. Interacts with SNAI2 (via zinc fingers). Interacts with RPL23A (via BIB domain) and SRP19; this interaction is involved in RPL23A and SRP19 import into the nucleus. Interacts (via HEAT repeats 8-12) with BAP1 (via non-classical PY-NLS); this interaction is direct, is involved in BAP1 nuclear import and disrupts BAP1 homodimerization.

The protein localises to the cytoplasm. Its subcellular location is the nucleus. In terms of biological role, functions in nuclear protein import as nuclear transport receptor. Serves as receptor for nuclear localization signals (NLS) in cargo substrates. May mediate docking of the importin/substrate complex to the nuclear pore complex (NPC) through binding to nucleoporin and the complex is subsequently translocated through the pore by an energy requiring, Ran-dependent mechanism. At the nucleoplasmic side of the NPC, Ran binds to the importin, the importin/substrate complex dissociates and importin is re-exported from the nucleus to the cytoplasm where GTP hydrolysis releases Ran. The directionality of nuclear import is thought to be conferred by an asymmetric distribution of the GTP- and GDP-bound forms of Ran between the cytoplasm and nucleus. Involved in nuclear import of M9-containing proteins. In vitro, binds directly to the M9 region of the heterogeneous nuclear ribonucleoproteins (hnRNP), A1 and A2 and mediates their nuclear import. Involved in hnRNP A1/A2 nuclear export. Mediates the nuclear import of ribosomal proteins RPL23A, RPS7 and RPL5. In vitro, mediates nuclear import of SRP19. Mediates the import of histones H2A, H2B, H3 and H4. Mediates nuclear import of ADAR/ADAR1 in a RanGTP-dependent manner. Main mediator of PR-DUB complex component BAP1 nuclear import; acts redundantly with the karyopherins KPNA1 and KPNA2. This Mus musculus (Mouse) protein is Transportin-1 (Tnpo1).